The following is a 683-amino-acid chain: THO complex subunit 5 (683 aa).

Positions 1–42 are disordered; the sequence is MSSESSKKRKPKVIRSDGAPAEGKRNRSDTEQEGKYYSEEAE. The residue at position 2 (Ser2) is an N-acetylserine. Positions 2 to 144 are interaction with CSF1R; sequence SSESSKKRKP…YEVMHLQKEI (143 aa). An interaction with THOC7 region spans residues 2-199; it reads SSESSKKRKP…RLDWELEQRK (198 aa). Residues Ser5 and Ser6 each carry the phosphoserine modification. Positions 7–10 match the Nuclear localization signal motif; that stretch reads KKRK. Over residues 22-42 the composition is skewed to basic and acidic residues; sequence EGKRNRSDTEQEGKYYSEEAE. Positions 81-247 form a coiled coil; it reads AIEIEERRIQ…QASLPVQEYL (167 aa). A Glycyl lysine isopeptide (Lys-Gly) (interchain with G-Cter in SUMO2) cross-link involves residue Lys153. Tyr225 is subject to Phosphotyrosine; by SRC. The segment at 247–683 is tandem RWD domains; that stretch reads LFMPFDQAHK…NHPQGFFSHR (437 aa). The disordered stretch occupies residues 301-336; sequence FKPPEDSQDDESDSDAEEEQTTKRRRPTLGVQLDDK. The segment covering 306-319 has biased composition (acidic residues); the sequence is DSQDDESDSDAEEE. A phosphoserine mark is found at Ser307, Ser312, and Ser314. Thr328 is subject to Phosphothreonine.

This sequence belongs to the THOC5 family. Component of the THO subcomplex, which is composed of THOC1, THOC2, THOC3, THOC5, THOC6 and THOC7. The THO subcomplex interacts with DDX39B to form the THO-DDX39B complex which multimerizes into a 28-subunit tetrameric assembly. Component of the transcription/export (TREX) complex at least composed of ALYREF/THOC4, DDX39B, SARNP/CIP29, CHTOP and the THO subcomplex; in the complex interacts with THOC1, THOC2, THOC5, THOC6 and THOC7; forms a coiled-coil dimer with THOC7; together with THOC6 and THOC7, plays a key structural role in oligomerization of the THO-DDX39B complex. TREX seems to have a dynamic structure involving ATP-dependent remodeling. Interacts with phosphorylated CSF1R. Interacts (via N-terminus) with the NTF2 domain of NXF1. Forms a complex with CEBPB. Interacts with CPSF6; indicative for an association with the cleavage factor Im (CFIm) complex. Interacts with LUZP4. Interacts with NCBP3. In terms of processing, phosphorylated on tyrosine upon binding to activated CSF1R; which causes a dissociation of the two proteins. Phosphorylation on Ser-5 and/or Ser-6 is required for nuclear export. Phosphorylated on Thr-328 in insulin-stimulated adipocytes. Phosphorylation at Tyr-225 modulates mRNA binding. Ubiquitously expressed.

It localises to the nucleus. Its subcellular location is the cytoplasm. Its function is as follows. Component of the THO subcomplex of the TREX complex which is thought to couple mRNA transcription, processing and nuclear export, and which specifically associates with spliced mRNA and not with unspliced pre-mRNA. Plays a key structural role in the oligomerization of the THO-DDX39B complex. TREX is recruited to spliced mRNAs by a transcription-independent mechanism, binds to mRNA upstream of the exon-junction complex (EJC) and is recruited in a splicing- and cap-dependent manner to a region near the 5' end of the mRNA where it functions in mRNA export to the cytoplasm via the TAP/NXF1 pathway. THOC5 in conjunction with ALYREF/THOC4 functions in NXF1-NXT1 mediated nuclear export of HSP70 mRNA; both proteins enhance the RNA binding activity of NXF1 and are required for NXF1 localization to the nuclear rim. Involved in transcription elongation and genome stability. Involved in alternative polyadenylation site choice by recruiting CPSF6 to 5' region of target genes; probably mediates association of the TREX and CFIm complexes. In terms of biological role, regulates the expression of myeloid transcription factors CEBPA, CEBPB and GAB2 by enhancing the levels of phosphatidylinositol 3,4,5-trisphosphate. May be involved in the differentiation of granulocytes and adipocytes. Essential for hematopoietic primitive cell survival and plays an integral role in monocytic development. Functionally, (Microbial infection) The TREX complex is essential for the export of Kaposi's sarcoma-associated herpesvirus (KSHV) intronless mRNAs and infectious virus production. In Homo sapiens (Human), this protein is THO complex subunit 5 (THOC5).